A 1454-amino-acid polypeptide reads, in one-letter code: Probable cleavage and polyadenylation specificity factor subunit 1 (1454 aa).

Residues 810 to 843 (EEKEKKAKQTAAQEKEKETEKKKDDAKNEEDQVN) form a disordered region. Residues 812–843 (KEKKAKQTAAQEKEKETEKKKDDAKNEEDQVN) are compositionally biased toward basic and acidic residues.

This sequence belongs to the CPSF1 family. As to quaternary structure, CPSF is a heterotetramer composed of four distinct subunits 160 (cpsf-1), 100 (cpsf-2), 70 (cpsf-3), and 30 kDa (cpsf-4).

The protein localises to the nucleus. CPSF plays a key role in pre-mRNA 3'-end formation, recognizing the AAUAAA signal sequence and interacting with poly(A)polymerase and other factors to bring about cleavage and poly(A) addition. This subunit is involved in the RNA recognition step of the polyadenylation reaction. This Caenorhabditis briggsae protein is Probable cleavage and polyadenylation specificity factor subunit 1.